Here is a 434-residue protein sequence, read N- to C-terminus: MKRVYSKIESIAGNVITVTAQGIKYGELAIVKAKDTSSLAEVIKLDREKVSLQVYGGTRGVSTSDEIKFLGHTMQVSFSDNLLGRIFDGSGNPRDGGPSLDDNLIEIGGPSANPTKRIVPRNMIRTGLPMIDVFNTLVESQKLPIFSVSGEPYNELLVRIALQAEVDLIILGGMGLKHDDYLTFKDSLEKGGALSRTIFFVHTANDSVVESLTVPDISLSVAEKFALKGKKVLVLLTDMTNFADAMKEISITMEQVPSNRGYPGDLYSQLAYRYEKAIDFEGAGSITILAVTTMPGDDVTHPVPDNTGYITEGQYYLKGGRIEPFGSLSRLKQMVNSKTRDDHRTIMDTMIKLYASSKESVEKKAMGFNMTKWDEKLLKYSNMFESKMMDLSVNIPLEEALDLGWDILASCFSPKETGIKTDLIQKYWPKKETY.

This sequence belongs to the ATPase alpha/beta chains family.

Functionally, produces ATP from ADP in the presence of a proton gradient across the membrane. The V-type beta chain is a regulatory subunit. This is V-type ATP synthase beta chain from Borreliella afzelii (strain PKo) (Borrelia afzelii).